We begin with the raw amino-acid sequence, 217 residues long: Cytidylate kinase (217 aa).

9-17 provides a ligand contact to ATP; it reads GPAGAGKST.

This sequence belongs to the cytidylate kinase family. Type 1 subfamily.

The protein localises to the cytoplasm. It catalyses the reaction CMP + ATP = CDP + ADP. It carries out the reaction dCMP + ATP = dCDP + ADP. The polypeptide is Cytidylate kinase (Clostridium acetobutylicum (strain ATCC 824 / DSM 792 / JCM 1419 / IAM 19013 / LMG 5710 / NBRC 13948 / NRRL B-527 / VKM B-1787 / 2291 / W)).